The following is a 389-amino-acid chain: S-adenosylmethionine synthase (389 aa).

Histidine 17 serves as a coordination point for ATP. Position 19 (aspartate 19) interacts with Mg(2+). Residue glutamate 45 coordinates K(+). 2 residues coordinate L-methionine: glutamate 58 and glutamine 101. Residues 101–111 (QSPDISQGVTE) form a flexible loop region. Residues 168 to 170 (DSK), 234 to 235 (RF), aspartate 243, 249 to 250 (RK), alanine 266, and lysine 270 each bind ATP. Aspartate 243 lines the L-methionine pocket. Lysine 274 is a binding site for L-methionine.

The protein belongs to the AdoMet synthase family. Homotetramer; dimer of dimers. Mg(2+) serves as cofactor. Requires K(+) as cofactor.

It localises to the cytoplasm. It catalyses the reaction L-methionine + ATP + H2O = S-adenosyl-L-methionine + phosphate + diphosphate. The protein operates within amino-acid biosynthesis; S-adenosyl-L-methionine biosynthesis; S-adenosyl-L-methionine from L-methionine: step 1/1. In terms of biological role, catalyzes the formation of S-adenosylmethionine (AdoMet) from methionine and ATP. The overall synthetic reaction is composed of two sequential steps, AdoMet formation and the subsequent tripolyphosphate hydrolysis which occurs prior to release of AdoMet from the enzyme. The polypeptide is S-adenosylmethionine synthase (Syntrophotalea carbinolica (strain DSM 2380 / NBRC 103641 / GraBd1) (Pelobacter carbinolicus)).